The following is a 337-amino-acid chain: Phenylalanine--tRNA ligase alpha subunit (337 aa).

Glu-252 lines the Mg(2+) pocket.

The protein belongs to the class-II aminoacyl-tRNA synthetase family. Phe-tRNA synthetase alpha subunit type 1 subfamily. As to quaternary structure, tetramer of two alpha and two beta subunits. It depends on Mg(2+) as a cofactor.

It is found in the cytoplasm. It catalyses the reaction tRNA(Phe) + L-phenylalanine + ATP = L-phenylalanyl-tRNA(Phe) + AMP + diphosphate + H(+). The chain is Phenylalanine--tRNA ligase alpha subunit from Francisella tularensis subsp. holarctica (strain OSU18).